A 213-amino-acid polypeptide reads, in one-letter code: Protein transport protein SEC22 (213 aa).

Over 1 to 192 the chain is Cytoplasmic; it reads MVLSTLIMRA…QRINWEAMIR (192 aa). The Longin domain maps to 6–117; that stretch reads LIMRASDGLP…YKFVEFDTFM (112 aa). A v-SNARE coiled-coil homology domain is found at 132-192; that stretch reads NLDKLNTELQ…QRINWEAMIR (61 aa). Residues 193-213 traverse the membrane as a helical; Anchor for type IV membrane protein segment; the sequence is QYIPFIGVGLIGLFMLWWMLF.

Belongs to the synaptobrevin family.

The protein resides in the membrane. It localises to the endoplasmic reticulum membrane. The protein localises to the golgi apparatus membrane. Functionally, required for transport from the ER to the Golgi complex. The polypeptide is Protein transport protein SEC22 (SEC22) (Yarrowia lipolytica (strain CLIB 122 / E 150) (Yeast)).